The primary structure comprises 330 residues: Protein LEG1 homolog (330 aa).

The first 20 residues, 1–20 (MAFLPSWVCVLVGSFSASLA), serve as a signal peptide directing secretion. N-linked (GlcNAc...) asparagine glycosylation is found at Asn24 and Asn69.

It belongs to the LEG1 family. Detected in saliva and in hypomineralized dental enamel (at protein level).

Its subcellular location is the secreted. Functionally, may be involved in early liver development. This chain is Protein LEG1 homolog, found in Homo sapiens (Human).